Here is a 708-residue protein sequence, read N- to C-terminus: Elongation factor G (708 aa).

The tr-type G domain maps to Lys-8 to Met-290. GTP is bound by residues Ala-17–Thr-24, Asp-88–His-92, and Asn-142–Asp-145.

Belongs to the TRAFAC class translation factor GTPase superfamily. Classic translation factor GTPase family. EF-G/EF-2 subfamily.

The protein resides in the cytoplasm. In terms of biological role, catalyzes the GTP-dependent ribosomal translocation step during translation elongation. During this step, the ribosome changes from the pre-translocational (PRE) to the post-translocational (POST) state as the newly formed A-site-bound peptidyl-tRNA and P-site-bound deacylated tRNA move to the P and E sites, respectively. Catalyzes the coordinated movement of the two tRNA molecules, the mRNA and conformational changes in the ribosome. This Psychrobacter arcticus (strain DSM 17307 / VKM B-2377 / 273-4) protein is Elongation factor G.